We begin with the raw amino-acid sequence, 287 residues long: 4-hydroxybenzoate octaprenyltransferase (287 aa).

The next 6 membrane-spanning stretches (helical) occupy residues 41–61 (LPLL…GCAI), 92–112 (VALA…LNAL), 133–153 (FFAI…PMAF), 160–180 (VPML…AYDT), 218–238 (LGIY…WLGW), and 267–287 (NNWL…ATWF).

This sequence belongs to the UbiA prenyltransferase family. The cofactor is Mg(2+).

The protein localises to the cell inner membrane. It carries out the reaction all-trans-octaprenyl diphosphate + 4-hydroxybenzoate = 4-hydroxy-3-(all-trans-octaprenyl)benzoate + diphosphate. It functions in the pathway cofactor biosynthesis; ubiquinone biosynthesis. Catalyzes the prenylation of para-hydroxybenzoate (PHB) with an all-trans polyprenyl group. Mediates the second step in the final reaction sequence of ubiquinone-8 (UQ-8) biosynthesis, which is the condensation of the polyisoprenoid side chain with PHB, generating the first membrane-bound Q intermediate 3-octaprenyl-4-hydroxybenzoate. This chain is 4-hydroxybenzoate octaprenyltransferase, found in Paraburkholderia xenovorans (strain LB400).